The sequence spans 130 residues: Large ribosomal subunit protein bL19 (130 aa).

This sequence belongs to the bacterial ribosomal protein bL19 family.

In terms of biological role, this protein is located at the 30S-50S ribosomal subunit interface and may play a role in the structure and function of the aminoacyl-tRNA binding site. In Burkholderia ambifaria (strain ATCC BAA-244 / DSM 16087 / CCUG 44356 / LMG 19182 / AMMD) (Burkholderia cepacia (strain AMMD)), this protein is Large ribosomal subunit protein bL19.